The sequence spans 211 residues: Shikimate kinase (211 aa).

The segment at 1-22 is disordered; that stretch reads MHFRYNYRMQRSKTPNTKNSDT. Positions 12–22 are enriched in polar residues; sequence SKTPNTKNSDT. Position 36-41 (36-41) interacts with ATP; that stretch reads GSGKTT. Position 40 (Thr40) interacts with Mg(2+). Substrate is bound by residues Asp58, Arg82, and Gly104. Position 142 (Arg142) interacts with ATP. Arg161 is a binding site for substrate. ATP is bound at residue Gln178.

The protein belongs to the shikimate kinase family. As to quaternary structure, monomer. It depends on Mg(2+) as a cofactor.

The protein localises to the cytoplasm. The enzyme catalyses shikimate + ATP = 3-phosphoshikimate + ADP + H(+). It participates in metabolic intermediate biosynthesis; chorismate biosynthesis; chorismate from D-erythrose 4-phosphate and phosphoenolpyruvate: step 5/7. Functionally, catalyzes the specific phosphorylation of the 3-hydroxyl group of shikimic acid using ATP as a cosubstrate. The chain is Shikimate kinase from Nitrosomonas europaea (strain ATCC 19718 / CIP 103999 / KCTC 2705 / NBRC 14298).